Consider the following 95-residue polypeptide: Small ribosomal subunit protein bS6 (95 aa).

This sequence belongs to the bacterial ribosomal protein bS6 family.

Functionally, binds together with bS18 to 16S ribosomal RNA. The protein is Small ribosomal subunit protein bS6 of Exiguobacterium sibiricum (strain DSM 17290 / CCUG 55495 / CIP 109462 / JCM 13490 / 255-15).